The chain runs to 354 residues: D-alanine--D-alanine ligase (354 aa).

Residues 133–338 form the ATP-grasp domain; it reads KHLFAQAGLP…YSDLIEQLVE (206 aa). Residue 166–221 participates in ATP binding; the sequence is EKELGYPCFVKPANLGSSVGISKCRNREELEKAFELAFEYDRKIVVEEGIAGREIE. Residues Asp292, Glu305, and Asn307 each contribute to the Mg(2+) site.

The protein belongs to the D-alanine--D-alanine ligase family. It depends on Mg(2+) as a cofactor. Mn(2+) serves as cofactor.

It localises to the cytoplasm. The enzyme catalyses 2 D-alanine + ATP = D-alanyl-D-alanine + ADP + phosphate + H(+). Its pathway is cell wall biogenesis; peptidoglycan biosynthesis. Cell wall formation. The polypeptide is D-alanine--D-alanine ligase (Bacillus velezensis (strain DSM 23117 / BGSC 10A6 / LMG 26770 / FZB42) (Bacillus amyloliquefaciens subsp. plantarum)).